The primary structure comprises 395 residues: Chaperone protein DnaJ 1 (395 aa).

One can recognise a J domain in the interval Asp-10 to Arg-75. Residues Gly-164–Thr-242 form a CR-type zinc finger. 8 residues coordinate Zn(2+): Cys-177, Cys-180, Cys-194, Cys-197, Cys-216, Cys-219, Cys-230, and Cys-233. CXXCXGXG motif repeat units follow at residues Cys-177–Gly-184, Cys-194–Gly-201, Cys-216–Gly-223, and Cys-230–Gly-237.

It belongs to the DnaJ family. As to quaternary structure, homodimer. Requires Zn(2+) as cofactor.

It is found in the cytoplasm. Functionally, participates actively in the response to hyperosmotic and heat shock by preventing the aggregation of stress-denatured proteins and by disaggregating proteins, also in an autonomous, DnaK-independent fashion. Unfolded proteins bind initially to DnaJ; upon interaction with the DnaJ-bound protein, DnaK hydrolyzes its bound ATP, resulting in the formation of a stable complex. GrpE releases ADP from DnaK; ATP binding to DnaK triggers the release of the substrate protein, thus completing the reaction cycle. Several rounds of ATP-dependent interactions between DnaJ, DnaK and GrpE are required for fully efficient folding. Also involved, together with DnaK and GrpE, in the DNA replication of plasmids through activation of initiation proteins. The protein is Chaperone protein DnaJ 1 of Mycobacterium bovis (strain ATCC BAA-935 / AF2122/97).